The chain runs to 81 residues: Salivary thrombin inhibitor anophelin (81 aa).

Residues 1-22 (MANKLFLISLLCVVLVAKIAQA) form the signal peptide. Asn45 carries an N-linked (GlcNAc...) asparagine glycan. Positions 70 to 73 (DPGR) are blocks active site cleft of host thrombin in a reverse direction compared to substrates.

It belongs to the anophelin family. In terms of assembly, interacts with human F2 (thrombin); the interaction results in thrombin inhibition.

The protein resides in the secreted. Salivary protein with anticoagulant activity that inhibits host thrombin (F2). The chain is Salivary thrombin inhibitor anophelin from Anopheles darlingi (Mosquito).